Consider the following 44-residue polypeptide: MRDLKTYLSAAPVLSTIWFGALAGLLIEINRFFPDALTFPFFSF.

A helical transmembrane segment spans residues 7–27 (YLSAAPVLSTIWFGALAGLLI).

This sequence belongs to the PsaJ family.

It localises to the plastid. The protein resides in the chloroplast thylakoid membrane. May help in the organization of the PsaE and PsaF subunits. The chain is Photosystem I reaction center subunit IX from Pelargonium hortorum (Common geranium).